We begin with the raw amino-acid sequence, 151 residues long: MGVKEIVSNRKAFHHYEVLETLDAGIVLTGTEIKSLRDHGGNLGDAYVTISKGEAWLLQSSIAPYRFGNINNHEERRKRKLLLHKYEIHKLDARISQKGLTVVPLSFFFSKGFVKVRIGCCRGKKAHDKRQSIIEREKNRELAAAMKRSYR.

Belongs to the SmpB family.

It is found in the cytoplasm. Its function is as follows. Required for rescue of stalled ribosomes mediated by trans-translation. Binds to transfer-messenger RNA (tmRNA), required for stable association of tmRNA with ribosomes. tmRNA and SmpB together mimic tRNA shape, replacing the anticodon stem-loop with SmpB. tmRNA is encoded by the ssrA gene; the 2 termini fold to resemble tRNA(Ala) and it encodes a 'tag peptide', a short internal open reading frame. During trans-translation Ala-aminoacylated tmRNA acts like a tRNA, entering the A-site of stalled ribosomes, displacing the stalled mRNA. The ribosome then switches to translate the ORF on the tmRNA; the nascent peptide is terminated with the 'tag peptide' encoded by the tmRNA and targeted for degradation. The ribosome is freed to recommence translation, which seems to be the essential function of trans-translation. The polypeptide is SsrA-binding protein (Chlamydia trachomatis serovar A (strain ATCC VR-571B / DSM 19440 / HAR-13)).